A 312-amino-acid chain; its full sequence is Molybdenum cofactor biosynthesis bifunctional protein (312 aa).

The tract at residues Met-1–His-155 is molybdenum cofactor biosynthesis protein C. Substrate contacts are provided by residues Leu-74 to His-76 and Met-110 to Glu-111. The active site involves Asp-125. The interval Pro-156–Ala-312 is molybdenum cofactor biosynthesis protein B.

In the N-terminal section; belongs to the MoaC family. It in the C-terminal section; belongs to the MoaB/Mog family.

It carries out the reaction (8S)-3',8-cyclo-7,8-dihydroguanosine 5'-triphosphate = cyclic pyranopterin phosphate + diphosphate. Its pathway is cofactor biosynthesis; molybdopterin biosynthesis. Functionally, catalyzes the conversion of (8S)-3',8-cyclo-7,8-dihydroguanosine 5'-triphosphate to cyclic pyranopterin monophosphate (cPMP). This Chlorobaculum tepidum (strain ATCC 49652 / DSM 12025 / NBRC 103806 / TLS) (Chlorobium tepidum) protein is Molybdenum cofactor biosynthesis bifunctional protein (moaCB).